We begin with the raw amino-acid sequence, 680 residues long: DNA ligase (680 aa).

Residues 35 to 39, 84 to 85, and Glu-115 contribute to the NAD(+) site; these read DAQYD and SL. The active-site N6-AMP-lysine intermediate is Lys-117. The NAD(+) site is built by Arg-138, Glu-174, Lys-291, and Lys-315. Zn(2+) contacts are provided by Cys-419, Cys-422, Cys-437, and Cys-442. In terms of domain architecture, BRCT spans 601–680; that stretch reads NKNMPFSGME…REFINMLEQS (80 aa).

This sequence belongs to the NAD-dependent DNA ligase family. LigA subfamily. Mg(2+) is required as a cofactor. It depends on Mn(2+) as a cofactor.

It carries out the reaction NAD(+) + (deoxyribonucleotide)n-3'-hydroxyl + 5'-phospho-(deoxyribonucleotide)m = (deoxyribonucleotide)n+m + AMP + beta-nicotinamide D-nucleotide.. Functionally, DNA ligase that catalyzes the formation of phosphodiester linkages between 5'-phosphoryl and 3'-hydroxyl groups in double-stranded DNA using NAD as a coenzyme and as the energy source for the reaction. It is essential for DNA replication and repair of damaged DNA. In Dehalococcoides mccartyi (strain ATCC BAA-2100 / JCM 16839 / KCTC 5957 / BAV1), this protein is DNA ligase.